The primary structure comprises 644 residues: Leucine-rich repeat protein soc-2 homolog (644 aa).

The span at 1–19 shows a compositional bias: low complexity; it reads MNLCSSGATASTTSLSSTG. 2 disordered regions span residues 1–60 and 82–150; these read MNLC…APTL and NSPA…IQAD. 2 stretches are compositionally biased toward gly residues: residues 26–50 and 87–96; these read GVPGGGAEGGGGDGGSGNSGGGGKA and GAGGASGFTG. Positions 99–117 are enriched in polar residues; sequence QQPTGSNGHSHLHNENNAN. 20 LRR repeats span residues 164-185, 187-208, 210-231, 233-254, 256-277, 279-300, 302-323, 325-346, 348-370, 371-392, 395-416, 419-440, 443-464, 466-487, 489-510, 512-533, 535-556, 558-579, 581-603, and 605-626; these read GIKRLDLSKSSITVIPSTVKEC, HLTELYLYSNKIGQLPPEIGCL, SLRNLALNENSLTSLPESLQNC, QLKVLDLRHNKLAEIPPVIYRL, SLTTLYLRFNRITAVADDLRQL, NLTMLSLRENKIRELGSAIGAL, NLTTLDVSHNHLEHLPEDIGNC, NLSALDLQHNELLDIPDSIGNL, SLVRLGMRYNRLNSVPATLKNCK, SMDEFNVEGNGITQLPDGMLAS, GLTTITLSRNQFASYPTGGPAQ, NVYSINLEHNRIDKIPYGIFSR, GLTKLNMKENMLTALPLDIGTW, NMVELNLATNALQKLPDDIMNL, NLEILILSNNMLKKIPNTIGNL, RLRILDLEENRIEVLPHEIGLL, ELQRLILQTNQITMLPRSIGHL, NLTHLSVSENNLQFLPEEIGSL, SLENLYINQNPGLEKLPFELALC, and NLKYLNIDKCPLSTIPPEIQAG.

It belongs to the SHOC2 family.

Its function is as follows. Acts as a Ras effector and participates in MAPK pathway activation. Probably acts as a regulatory subunit of protein phosphatase that specifically dephosphorylates Raf kinase and stimulate Raf activity at specialized signaling complexes upon Ras activation. In Drosophila erecta (Fruit fly), this protein is Leucine-rich repeat protein soc-2 homolog (Sur-8).